We begin with the raw amino-acid sequence, 193 residues long: Potassium-transporting ATPase KdpC subunit (193 aa).

The helical transmembrane segment at 7-27 (PALVLFAALTLLTGVAYPLAV) threads the bilayer.

This sequence belongs to the KdpC family. In terms of assembly, the system is composed of three essential subunits: KdpA, KdpB and KdpC.

The protein localises to the cell inner membrane. Part of the high-affinity ATP-driven potassium transport (or Kdp) system, which catalyzes the hydrolysis of ATP coupled with the electrogenic transport of potassium into the cytoplasm. This subunit acts as a catalytic chaperone that increases the ATP-binding affinity of the ATP-hydrolyzing subunit KdpB by the formation of a transient KdpB/KdpC/ATP ternary complex. In Rhodospirillum rubrum (strain ATCC 11170 / ATH 1.1.1 / DSM 467 / LMG 4362 / NCIMB 8255 / S1), this protein is Potassium-transporting ATPase KdpC subunit.